We begin with the raw amino-acid sequence, 656 residues long: Protein O1 homolog (656 aa).

The chain crosses the membrane as a helical span at residues 544-564 (FIKKVILANVIFEYIFTLIII).

This sequence belongs to the chordopoxvirinae O1 family.

It localises to the membrane. The polypeptide is Protein O1 homolog (Vertebrata (FPV)).